The chain runs to 945 residues: MYGAGGGRAKAERKGGVKEEAGPGGTGTGGNRVELLVFGYACKLFRDDERALAQEQGQHLIPWMGDHKILIDRYDGRGHLHDLSAYDAEYATWNRDYQLSEEEARVEALCDEERYLALHTDLLEEEARQEEEYKRLSEALAEDGNYSAVGFTYGSDYYDPSEPTEEEEPSKQREKSEAENLEENEEPFIAPLGLSVPSDVELPPTAKMHAIIERTANFVCKQGAQFEIMLKAKQARNSQFDFLRFDHYLNPYYKFIQKAMKEGRYTVLAESKSEEKKKSGPTSDNEEEDDEEDGSYLHPSLFASKKSSRLEELMKPLKVVDPDHPLAALVRKAQADSSAPAPPTADGTPAQPSQVEYTADSTVAAMYYSYYMLPDGTYCLAPPPPGIDVATYYSTLPAGVTVSSSPGVTTTVPPPPGTTPPPPPTTAESSSGVTSTTTTTSALAPVAIIPPPPDIQPVIDKLAEYVARNGLKFETSVRAKNDQRFEFLQPWHQYNAYYEFKKQFFLQKEGGGSTQAASTAEEAPTETAVEESSEAGEDGAPEGMAETGGRGSGKKEAGSSKSTVDGKLVKASFAPISFAIKAKENDLLPLEKNRVKLDDDSEEDEESRECQESTSSVANPSPAAAPPSAVVEEKKPQLTQEELEAKQAKQKLEDRLAAAAREKLAQASKESKEKQLQAERKRKAALFLQTLKNPLPDAEVGKLEESTFGVEETGVMPCPLLVGGRTLPMLEGKPPERPSSRCRDPPREEEREKKKKKHKKRSRTRSRSPKYHSSSKPRSRSHSKAKHSLPSAYRTVRRSRSRSRSPRRRAHSPERRREDRSVPTAYRMSGSPGVSRKRTRSRSPHEKKKKRRSRSRTKAKARSQSTSPSKQAAQRPSAHSAHSASISPVESRGSSQERSRGVSQEKDGQISSAIVSSVQSKITQDLMAKVRAMLAASKNLQTSAS.

Disordered regions lie at residues Met-1–Thr-28 and Tyr-157–Ala-190. Composition is skewed to basic and acidic residues over residues Ala-9–Ala-21 and Pro-169–Ala-178. The stretch at Ile-211 to Tyr-253 is one SURP motif 1 repeat. Residues Ala-269–His-298 form a disordered region. Phosphoserine is present on Ser-283. Positions Asp-284 to Gly-294 are enriched in acidic residues. Lys-315 carries the post-translational modification N6-acetyllysine. 2 disordered regions span residues Lys-332–Val-355 and Ser-403–Thr-438. A compositionally biased stretch (low complexity) spans Ala-335 to Pro-352. Positions Val-412–Thr-425 are enriched in pro residues. The segment covering Thr-426–Thr-438 has biased composition (low complexity). The stretch at Val-458 to Tyr-498 is one SURP motif 2 repeat. 3 disordered regions span residues Gly-512–Gly-566, Pro-589–Arg-680, and Gly-714–Lys-921. Residues Thr-514–Thr-527 are compositionally biased toward low complexity. Over residues Ala-528–Ala-540 the composition is skewed to acidic residues. Basic and acidic residues predominate over residues Pro-589–Asp-598. Phosphoserine is present on residues Ser-601 and Ser-621. Residues Ser-615–Val-630 are compositionally biased toward low complexity. Residues Glu-632–Leu-686 are a coiled coil. Thr-639 bears the Phosphothreonine mark. 2 stretches are compositionally biased toward basic and acidic residues: residues Leu-643 to Glu-679 and Lys-733 to Glu-752. 2 stretches are compositionally biased toward basic residues: residues Lys-753–His-787 and Thr-795–Ala-810. Residues His-811–Ser-821 show a composition bias toward basic and acidic residues. Phosphoserine occurs at positions 829 and 831. Positions Ser-835–Ala-861 are enriched in basic residues. Over residues Gln-871–Ser-894 the composition is skewed to low complexity. Over residues Ser-895 to Gly-908 the composition is skewed to basic and acidic residues. Residues Ser-899 and Ser-903 each carry the phosphoserine modification. Low complexity predominate over residues Gln-909–Ser-920.

Its subcellular location is the nucleus. Its function is as follows. Plays a role as an alternative splicing regulator. Regulate its own expression at the level of RNA processing. Also regulates the splicing of fibronectin and CD45 genes. May act, at least in part, by interaction with other R/S-containing splicing factors. Represses the splicing of MAPT/Tau exon 10. The chain is Splicing factor, suppressor of white-apricot homolog (Sfswap) from Rattus norvegicus (Rat).